We begin with the raw amino-acid sequence, 522 residues long: Monogalactosyldiacylglycerol synthase, chloroplastic (522 aa).

The transit peptide at 1–98 directs the protein to the chloroplast; the sequence is MSHPSTVTSE…RIPLGFSSIG (98 aa).

This sequence belongs to the glycosyltransferase 28 family. Homodimer. The cofactor is Zn(2+).

The protein resides in the plastid. It localises to the chloroplast inner membrane. It carries out the reaction a 1,2-diacyl-sn-glycerol + UDP-alpha-D-galactose = a 1,2-diacyl-3-O-(beta-D-galactosyl)-sn-glycerol + UDP + H(+). Its activity is regulated as follows. Inhibited by ortho-phenanthroline and UDP (competitive inhibitor relatively to UDP-Gal only) and inactivated by citraconic anhydride, tert-butoxycarbonyl-L-methionine hydrosuccinimidyl ester (SLR) and N-ethylmaleimide (NEM). In terms of biological role, involved in the synthesis of the major structural component of photosynthetic membranes. The 1,2-diacylglycerol substrate preference is 18:2/18:2 &gt; 18:0/18:1 &gt; 18:1/18:1 &gt; 18:1/16:0 &gt; 16:0/18:2 &gt; 18:3/18:3 &gt; 16:0/18:1 &gt; 16:0/16:0 &gt; 18:0/18:0. The sequence is that of Monogalactosyldiacylglycerol synthase, chloroplastic (MGD A) from Spinacia oleracea (Spinach).